The following is a 453-amino-acid chain: Cysteine--tRNA ligase (453 aa).

C30 is a binding site for Zn(2+). Residues 32 to 42 carry the 'HIGH' region motif; the sequence is PTVYDRAHLGN. 3 residues coordinate Zn(2+): C212, H237, and E241. Positions 268–272 match the 'KMSKS' region motif; it reads KMSKS. K271 provides a ligand contact to ATP.

This sequence belongs to the class-I aminoacyl-tRNA synthetase family. As to quaternary structure, monomer. The cofactor is Zn(2+).

It is found in the cytoplasm. The enzyme catalyses tRNA(Cys) + L-cysteine + ATP = L-cysteinyl-tRNA(Cys) + AMP + diphosphate. The polypeptide is Cysteine--tRNA ligase (Jannaschia sp. (strain CCS1)).